Reading from the N-terminus, the 188-residue chain is Elongation factor P (188 aa).

The residue at position 34 (K34) is an N6-(3,6-diaminohexanoyl)-5-hydroxylysine.

Belongs to the elongation factor P family. May be beta-lysylated on the epsilon-amino group of Lys-34 by the combined action of EpmA and EpmB, and then hydroxylated on the C5 position of the same residue by EpmC (if this protein is present). Lysylation is critical for the stimulatory effect of EF-P on peptide-bond formation. The lysylation moiety may extend toward the peptidyltransferase center and stabilize the terminal 3-CCA end of the tRNA. Hydroxylation of the C5 position on Lys-34 may allow additional potential stabilizing hydrogen-bond interactions with the P-tRNA.

Its subcellular location is the cytoplasm. Its pathway is protein biosynthesis; polypeptide chain elongation. In terms of biological role, involved in peptide bond synthesis. Alleviates ribosome stalling that occurs when 3 or more consecutive Pro residues or the sequence PPG is present in a protein, possibly by augmenting the peptidyl transferase activity of the ribosome. Modification of Lys-34 is required for alleviation. This is Elongation factor P from Xanthomonas axonopodis pv. citri (strain 306).